The chain runs to 1235 residues: ATP-dependent helicase/nuclease subunit A (1235 aa).

The region spanning 12–482 (SLWTDDQWKA…IDLSQNFRSR (471 aa)) is the UvrD-like helicase ATP-binding domain. 33-40 (AAAGSGKT) contacts ATP. The UvrD-like helicase C-terminal domain occupies 509 to 800 (AAELTLGANF…RMMTIHASKG (292 aa)).

The protein belongs to the helicase family. AddA subfamily. Heterodimer of AddA and AddB/RexB. It depends on Mg(2+) as a cofactor.

It catalyses the reaction Couples ATP hydrolysis with the unwinding of duplex DNA by translocating in the 3'-5' direction.. The enzyme catalyses ATP + H2O = ADP + phosphate + H(+). In terms of biological role, the heterodimer acts as both an ATP-dependent DNA helicase and an ATP-dependent, dual-direction single-stranded exonuclease. Recognizes the chi site generating a DNA molecule suitable for the initiation of homologous recombination. The AddA nuclease domain is required for chi fragment generation; this subunit has the helicase and 3' -&gt; 5' nuclease activities. This is ATP-dependent helicase/nuclease subunit A from Listeria monocytogenes serovar 1/2a (strain ATCC BAA-679 / EGD-e).